A 448-amino-acid polypeptide reads, in one-letter code: Glucose-6-phosphate isomerase (448 aa).

The active-site Proton donor is Glu290. Residues His311 and Lys425 contribute to the active site.

This sequence belongs to the GPI family.

The protein resides in the cytoplasm. It catalyses the reaction alpha-D-glucose 6-phosphate = beta-D-fructose 6-phosphate. It functions in the pathway carbohydrate biosynthesis; gluconeogenesis. Its pathway is carbohydrate degradation; glycolysis; D-glyceraldehyde 3-phosphate and glycerone phosphate from D-glucose: step 2/4. Functionally, catalyzes the reversible isomerization of glucose-6-phosphate to fructose-6-phosphate. This is Glucose-6-phosphate isomerase from Lactococcus lactis subsp. lactis (strain IL1403) (Streptococcus lactis).